A 209-amino-acid polypeptide reads, in one-letter code: Protein GrpE (209 aa).

A compositionally biased stretch (basic and acidic residues) spans 1 to 18 (MKIFNKDGNKNSKEDTKA). Residues 1–60 (MKIFNKDGNKNSKEDTKAGAENSEAQNSGSSAEEVNKARENPEEASASSEAEKSPEVKCQ) are disordered. A compositionally biased stretch (polar residues) spans 23–33 (SEAQNSGSSAE). The segment covering 50–60 (EAEKSPEVKCQ) has biased composition (basic and acidic residues).

This sequence belongs to the GrpE family. In terms of assembly, homodimer.

The protein localises to the cytoplasm. Functionally, participates actively in the response to hyperosmotic and heat shock by preventing the aggregation of stress-denatured proteins, in association with DnaK and GrpE. It is the nucleotide exchange factor for DnaK and may function as a thermosensor. Unfolded proteins bind initially to DnaJ; upon interaction with the DnaJ-bound protein, DnaK hydrolyzes its bound ATP, resulting in the formation of a stable complex. GrpE releases ADP from DnaK; ATP binding to DnaK triggers the release of the substrate protein, thus completing the reaction cycle. Several rounds of ATP-dependent interactions between DnaJ, DnaK and GrpE are required for fully efficient folding. The chain is Protein GrpE from Methanosarcina barkeri (strain Fusaro / DSM 804).